The chain runs to 117 residues: Ig heavy chain V region 1-72 (117 aa).

A signal peptide spans 1 to 19; the sequence is MGWSCIMLFLAATATGVHS. The tract at residues 20–49 is framework-1; that stretch reads QVQLQQPGAELVKPGASVKLSCKASGYTFT. Cysteines 41 and 115 form a disulfide. The tract at residues 50–54 is complementarity-determining-1; that stretch reads SYWMH. Positions 55–68 are framework-2; the sequence is WVKQRPGRGLEWIG. The interval 69–85 is complementarity-determining-2; sequence RIDPNSGGTKYNEKFKS. The framework-3 stretch occupies residues 86–117; sequence KATLTVDKPSSTAYMQLSSLTSEDSAVYYCAR.

The polypeptide is Ig heavy chain V region 1-72 (Mus musculus (Mouse)).